The sequence spans 195 residues: MSKIEHNSAKTIDGGAAALHKTVVMVGMMGAGKTAVGRALAQRLGVPFLDSDAEIESAANMSIPEIFERDGEAFFRDRESRVIARLLEGAPCVLSTGGGAFLAEANRRMISEHGVSVWLKADLTVLWNRVRHKDTRPLLRTADPRATLRALYEARVPLYSEADLCVISDGETSIEQMVDRVIAALATRKDVLELS.

30–35 (GAGKTA) contacts ATP. Position 34 (T34) interacts with Mg(2+). Residues D52, R76, and G98 each contribute to the substrate site. Residue R136 coordinates ATP. R155 serves as a coordination point for substrate.

It belongs to the shikimate kinase family. Monomer. Mg(2+) is required as a cofactor.

The protein resides in the cytoplasm. The enzyme catalyses shikimate + ATP = 3-phosphoshikimate + ADP + H(+). It functions in the pathway metabolic intermediate biosynthesis; chorismate biosynthesis; chorismate from D-erythrose 4-phosphate and phosphoenolpyruvate: step 5/7. Catalyzes the specific phosphorylation of the 3-hydroxyl group of shikimic acid using ATP as a cosubstrate. This chain is Shikimate kinase, found in Ruegeria pomeroyi (strain ATCC 700808 / DSM 15171 / DSS-3) (Silicibacter pomeroyi).